Reading from the N-terminus, the 598-residue chain is MVQFEANEKQFKLRREDCCLTIDRESGAVSFEPDELKPVARSKENSVTLFGSIKLKKDKYLILATEKSSAAQILGHKIYRVHKFEVIPYRNLLADDQDELDLYNLLQNHLKTGPFYFSYTWDLTNSLQRSCTDEGKASPILRSDKRFFWNEFASKDFIDLIGAHSEVSLFITPMIYGFITSASTIVKGRTITLALISRRSKQRAGTRYFTRGLDENGNPANFNETEQITIVSDEKSEVTYSHVQTRGSVPAFWAEVNNLRYKPLMVANSASMAAAAAKKHFDEQISIYGDQVVVNLVNCKGHELPIKQLYENVIRRLDNPHIHYHYFDFHKECSHMRWDRVSLLLNEIQPELEEQGYTTLDTQKYRVLSRQNGVVRSNCMDCLDRTNVVQSCIGRWVLTNQLRKCGIIGATHPLRSVIPLDNIFCNIWSDNADYISLSYSGTGALKTDFTRTGIRTRKGAFNDFVNSAKRYILNNFYDGARQDAYDLVLGQFRPDVNFRYRLDLRPLTIRCVPYILLACLILFFMTLFSRSSSTILPPSILLILTFLGIVASLYYCFAHGLQFINWPRLLLPSFLRSDMTPEGRVFVINRQLASKHKV.

Ser-46 is modified (phosphoserine). Positions Leu-106 to Gly-441 constitute an SAC domain. 2 consecutive transmembrane segments (helical) span residues Thr-508 to Phe-528 and Ile-535 to Tyr-555.

The protein resides in the endoplasmic reticulum membrane. This is an uncharacterized protein from Schizosaccharomyces pombe (strain 972 / ATCC 24843) (Fission yeast).